Here is a 794-residue protein sequence, read N- to C-terminus: Phenylalanine--tRNA ligase beta subunit (794 aa).

In terms of domain architecture, tRNA-binding spans 39 to 148; the sequence is APAFDNVVVA…SDAPVGQAIR (110 aa). Residues 399–474 form the B5 domain; it reads PVRKPVLLRT…RLYGYDNIPS (76 aa). Residues Asp-452, Asp-458, Glu-461, and Glu-462 each coordinate Mg(2+). An FDX-ACB domain is found at 700–793; sequence SKFPPVIRDL…FEQAFGAQLR (94 aa).

Belongs to the phenylalanyl-tRNA synthetase beta subunit family. Type 1 subfamily. As to quaternary structure, tetramer of two alpha and two beta subunits. Mg(2+) serves as cofactor.

It is found in the cytoplasm. The enzyme catalyses tRNA(Phe) + L-phenylalanine + ATP = L-phenylalanyl-tRNA(Phe) + AMP + diphosphate + H(+). In Dechloromonas aromatica (strain RCB), this protein is Phenylalanine--tRNA ligase beta subunit.